A 362-amino-acid chain; its full sequence is Probable tocopherol O-methyltransferase, chloroplastic (362 aa).

The transit peptide at 1–55 directs the protein to the chloroplast; sequence MAHAAAATGALAPLHPLLRCTSRHLCASASPRAGLCLHHHRRRRRSSRRTKLAVR. The segment at 141–150 is SAM motif I; that stretch reads VVDVGCGIGG. The segment at 204-212 is SAM motif II; that stretch reads GQFDLVWSM. The SAM motif III stretch occupies residues 231 to 240; sequence VAAPGARIII.

This sequence belongs to the class I-like SAM-binding methyltransferase superfamily. gTMT family.

It is found in the plastid. The protein resides in the chloroplast. The catalysed reaction is gamma-tocopherol + S-adenosyl-L-methionine = (+)-alpha-tocopherol + S-adenosyl-L-homocysteine + H(+). It carries out the reaction delta-tocotrienol + S-adenosyl-L-methionine = beta-tocotrienol + S-adenosyl-L-homocysteine + H(+). It catalyses the reaction gamma-tocotrienol + S-adenosyl-L-methionine = alpha-tocotrienol + S-adenosyl-L-homocysteine + H(+). The enzyme catalyses delta-tocopherol + S-adenosyl-L-methionine = beta-tocopherol + S-adenosyl-L-homocysteine + H(+). The protein operates within cofactor biosynthesis; tocopherol biosynthesis. Functionally, involved in the synthesis of tocopherol (vitamin E). Methylates gamma- and delta-tocopherol to form beta- and alpha-tocopherol, respectively. The polypeptide is Probable tocopherol O-methyltransferase, chloroplastic (VTE4) (Oryza sativa subsp. japonica (Rice)).